The chain runs to 153 residues: Large ribosomal subunit protein uL15 (153 aa).

Positions 21 to 41 (RGIGSGKGKTGGRGIKGQKSR) are disordered. The segment covering 23–35 (IGSGKGKTGGRGI) has biased composition (gly residues).

The protein belongs to the universal ribosomal protein uL15 family. Part of the 50S ribosomal subunit.

Its function is as follows. Binds to the 23S rRNA. This chain is Large ribosomal subunit protein uL15, found in Rickettsia felis (strain ATCC VR-1525 / URRWXCal2) (Rickettsia azadi).